The primary structure comprises 44 residues: Omega-plectoxin-Pt1a (44 aa).

5 cysteine pairs are disulfide-bonded: C3–C17, C10–C23, C16–C35, C20–C42, and C25–C33. T44 is modified (threonine amide). T44 is lipidated: O-palmitoyl threonine.

The protein belongs to the neurotoxin 02 (plectoxin) family. 02 (plectoxin) subfamily. In terms of processing, contains 5 disulfide bonds. Acylation by palmitate is required for biological activity. Expressed by the venom gland.

Its subcellular location is the secreted. In terms of biological role, toxin that inhibits presynaptic voltage-gated calcium channel (Cav) in Drosophila nerve terminals, most likely through specific block of the Cav2 channel (known as Dmca1A). In Plectreurys tristis (Spider), this protein is Omega-plectoxin-Pt1a.